A 413-amino-acid chain; its full sequence is Multidrug resistance protein MdtA (413 aa).

The signal sequence occupies residues 1 to 32 (MNAKRIRGLLIFAAVIAIAVLIWRHFTQTSPA). Residues 32 to 46 (AAPGTSEQHAARTSH) show a composition bias toward polar residues. Residues 32-59 (AAPGTSEQHAARTSHSGNNSSGNGGGRR) form a disordered region.

This sequence belongs to the membrane fusion protein (MFP) (TC 8.A.1) family. In terms of assembly, part of a tripartite efflux system composed of MdtA, MdtB and MdtC.

Its subcellular location is the cell inner membrane. The chain is Multidrug resistance protein MdtA from Pectobacterium carotovorum subsp. carotovorum (strain PC1).